The chain runs to 508 residues: U4/U6 small nuclear ribonucleoprotein Prp31 (508 aa).

The disordered stretch occupies residues 1–45 (MSLADELLADLEEAGEEDGLYPGGEEGESDGEPGERQVDGGLEDI). Acidic residues predominate over residues 7-32 (LLADLEEAGEEDGLYPGGEEGESDGE). 2 coiled-coil regions span residues 96-131 (EADPEYRLIVAANNLTVEIDNELNIIHKFVRDKYSK) and 192-226 (DDELQRLEEACDMALELNQSKHRIYEYVESRMSFI). The 119-residue stretch at 226–344 (IAPNLSIIVG…IERKFDKWQE (119 aa)) folds into the Nop domain. Disordered stretches follow at residues 345 to 368 (PPPVKQVKPLPAPLDGQRKKRGGR) and 442 to 461 (QSMTYGGKSTVRDRSSGTSS). Positions 362–375 (RKKRGGRRYRKMKE) match the Nuclear localization signal (NLS) motif.

Belongs to the PRP31 family. As to quaternary structure, identified in the spliceosome B complex. Component of the U4/U6-U5 tri-snRNP complex. Component of some MLL1/MLL complex.

The protein resides in the nucleus. Its subcellular location is the nucleus speckle. The protein localises to the cajal body. Its function is as follows. Involved in pre-mRNA splicing as component of the spliceosome. Required for the assembly of the U4/U5/U6 tri-snRNP complex, one of the building blocks of the spliceosome. The sequence is that of U4/U6 small nuclear ribonucleoprotein Prp31 (prpf31) from Danio rerio (Zebrafish).